The sequence spans 342 residues: MSSIPWIDNEFAYRALAHLPKFTQVNNSSTFKLRFRCPVCGDSKTDQNKARGWYYGDNNEGNIHCYNCNYHAPIGIYLKEFEPDLYREYIFEIRKEKGKSRPIEKPKELPKQPEKKIIKSLPSCVRLDKLAEDHPIIKYVKARCIPKDKWKYLWFTTEWPKLVNSIAPGTYKKEISEPRLVIPIYNANGKAESFQGRALKKDAPQKYITIEAYPEATKIYGVERVKDGDVYVLEGPIDSLFIENGIAITGGQLDLEVVPFKDRRVWVLDNEPRHPDTIKRMTKLVDAGERVMFWDKSPWKSKDVNDMIRKEGATPEQIMEYMKNNIAQGLMAKMRLSKYAKI.

Zn(2+)-binding residues include C37, C40, C65, and C68.

It belongs to the Tequatrovirus DNA primase family. In terms of assembly, monomer. Hexamer. Interacts with the DnaB-like replicative helicase; this interaction forms the active primosome complex, which is composed of 6 helicase and 1 primase subunits and expresses full helicase and primase activities. Interacts (via C-terminus) with the single-stranded DNA-binding protein. Part of the replicase complex that includes the DNA polymerase, the polymerase clamp, the clamp loader complex, the single-stranded DNA binding protein, the primase, the DnaB-like replicative helicase and the helicase assembly factor.

In terms of biological role, synthesizes short RNA primers for the lagging strand DNA replication. The primase synthesizes short RNA primers on the lagging strand that the polymerase elongates using dNTPs. Recognizes two trinucleotide sequences 5'-GTT-3' and 5'-GCT-3' in vitro, but uses only the first as the priming site in vivo. The polypeptide is DNA primase (61) (Escherichia coli (Bacteriophage T4)).